Reading from the N-terminus, the 415-residue chain is Lupus La protein homolog (415 aa).

Residues 7 to 99 (NEKMAALEAK…RRSPSRPLPE (93 aa)) enclose the HTH La-type RNA-binding domain. A phosphoserine mark is found at Ser92 and Ser94. The region spanning 111 to 187 (RSVYIKGFPT…TNLLILFKED (77 aa)) is the RRM domain. Position 116 is an N6-acetyllysine (Lys116). Thr120 is modified (phosphothreonine). 2 positions are modified to N6-acetyllysine: Lys128 and Lys327. Residues 226-343 (EGKMGCLLKF…HAARRFKGSH (118 aa)) form the xRRM domain. A disordered region spans residues 323–415 (ESLNKWKSKG…KKRENGARDK (93 aa)). The span at 328–341 (WKSKGGHAARRFKG) shows a compositional bias: basic residues. Lys356 is subject to N6-acetyllysine. Phosphothreonine is present on Thr377. The span at 377 to 415 (TRFDDDDHRRGPVKRGIDGRDREEPASKHKKRENGARDK) shows a compositional bias: basic and acidic residues.

As to quaternary structure, interacts with DDX15. May interact with RUFY1. Phosphorylated.

It localises to the nucleus. Binds to the 3' poly(U) terminus of nascent RNA polymerase III transcripts, protecting them from exonuclease digestion and facilitating their folding and maturation. The sequence is that of Lupus La protein homolog (Ssb) from Rattus norvegicus (Rat).